A 354-amino-acid chain; its full sequence is Chorismate synthase (354 aa).

NADP(+) contacts are provided by R48 and R54. FMN is bound by residues 125–127, 238–239, G278, 293–297, and R319; these read RSS, NA, and KPTSS.

The protein belongs to the chorismate synthase family. As to quaternary structure, homotetramer. It depends on FMNH2 as a cofactor.

The catalysed reaction is 5-O-(1-carboxyvinyl)-3-phosphoshikimate = chorismate + phosphate. The protein operates within metabolic intermediate biosynthesis; chorismate biosynthesis; chorismate from D-erythrose 4-phosphate and phosphoenolpyruvate: step 7/7. Functionally, catalyzes the anti-1,4-elimination of the C-3 phosphate and the C-6 proR hydrogen from 5-enolpyruvylshikimate-3-phosphate (EPSP) to yield chorismate, which is the branch point compound that serves as the starting substrate for the three terminal pathways of aromatic amino acid biosynthesis. This reaction introduces a second double bond into the aromatic ring system. The chain is Chorismate synthase from Buchnera aphidicola subsp. Acyrthosiphon pisum (strain 5A).